A 408-amino-acid chain; its full sequence is Neutral cholesterol ester hydrolase 1 (408 aa).

Residues methionine 1–serine 4 lie on the Cytoplasmic side of the membrane. Residues cysteine 5–serine 25 form a helical; Signal-anchor for type II membrane protein membrane-spanning segment. Residues alanine 26–leucine 408 are Lumenal-facing. The Involved in the stabilization of the negatively charged intermediate by the formation of the oxyanion hole signature appears at histidine 113–glycine 115. Serine 191 is a catalytic residue. Asparagine 270 is a glycosylation site (N-linked (GlcNAc...) asparagine). Aspartate 348 is an active-site residue. N-linked (GlcNAc...) asparagine glycosylation is present at asparagine 367. The active site involves histidine 378. Asparagine 389 carries an N-linked (GlcNAc...) asparagine glycan.

It belongs to the 'GDXG' lipolytic enzyme family. In terms of processing, N-glycosylated. In terms of tissue distribution, present in brain, heart, kidney, lung, spinal cord and testis but not liver (at protein level). Expressed in peritoneal macrophages and kidney.

The protein localises to the cell membrane. Its subcellular location is the microsome. It carries out the reaction a 1-O-alkyl-2-acetyl-sn-glycerol + H2O = a 1-O-alkyl-sn-glycerol + acetate + H(+). It catalyses the reaction 1-O-hexadecyl-2-acetyl-sn-glycerol + H2O = 1-O-hexadecyl-sn-glycerol + acetate + H(+). The enzyme catalyses a cholesterol ester + H2O = cholesterol + a fatty acid + H(+). The catalysed reaction is cholesteryl (9Z-octadecenoate) + H2O = cholesterol + (9Z)-octadecenoate + H(+). Inhibited by bulky trifluoromethyl ketones. Functionally, hydrolyzes 2-acetyl monoalkylglycerol ether (1-O-alkyl-2-acetyl-sn-glycerol), the penultimate precursor of the pathway for de novo synthesis of platelet-activating factor. May be responsible for the hydrolysis of cholesterol esters (such as cholesteryl (9Z-octadecenoate)) in macrophages. Also involved in organ detoxification by hydrolyzing exogenous organophosphorus compounds. The chain is Neutral cholesterol ester hydrolase 1 (Nceh1) from Mus musculus (Mouse).